The chain runs to 276 residues: Large ribosomal subunit protein uL2 (276 aa).

Residues 224-265 (GTAMNPIDHPHGGGEGKNFGKHPVSPWGVQTKGKRTRSNKRT) are disordered.

This sequence belongs to the universal ribosomal protein uL2 family. As to quaternary structure, part of the 50S ribosomal subunit. Forms a bridge to the 30S subunit in the 70S ribosome.

One of the primary rRNA binding proteins. Required for association of the 30S and 50S subunits to form the 70S ribosome, for tRNA binding and peptide bond formation. It has been suggested to have peptidyltransferase activity; this is somewhat controversial. Makes several contacts with the 16S rRNA in the 70S ribosome. The polypeptide is Large ribosomal subunit protein uL2 (Blochmanniella floridana).